Reading from the N-terminus, the 485-residue chain is NADH-quinone oxidoreductase subunit N (485 aa).

A run of 14 helical transmembrane segments spans residues 8 to 28 (LIALSPLLIVGLTVVVVMLCI), 35 to 55 (FVNATMTVIGLNIALLSLYFV), 75 to 95 (FYTGLVLLASLATSTFAYPWL), 105 to 125 (FYLLVLIAALGGILLSSANHL), 127 to 147 (SLFIGIELLSLPLFGLVGYAF), 159 to 179 (YMLLSAAASSFLLFGMALIYA), 203 to 223 (LLAGLGMMIVGLGFKLSLVPF), 235 to 255 (PAPVSTFLATAGKIAVFGAVM), 271 to 291 (IVLGVIAFASILFGNVMAVSQ), 297 to 317 (LLGYSSIAHLGYLLVALIAVQ), 326 to 346 (VGVYLVGYLFSSLGAFGVVSL), 374 to 394 (AVMTVMMLSLAGIPMTLGFFG), 407 to 426 (LWWLTGAVVLGSAIGLYYYL), and 449 to 469 (ALTAGGVVVLISSIAVLFFGL).

This sequence belongs to the complex I subunit 2 family. NDH-1 is composed of 13 different subunits. Subunits NuoA, H, J, K, L, M, N constitute the membrane sector of the complex.

It is found in the cell inner membrane. It carries out the reaction a quinone + NADH + 5 H(+)(in) = a quinol + NAD(+) + 4 H(+)(out). NDH-1 shuttles electrons from NADH, via FMN and iron-sulfur (Fe-S) centers, to quinones in the respiratory chain. The immediate electron acceptor for the enzyme in this species is believed to be ubiquinone. Couples the redox reaction to proton translocation (for every two electrons transferred, four hydrogen ions are translocated across the cytoplasmic membrane), and thus conserves the redox energy in a proton gradient. The protein is NADH-quinone oxidoreductase subunit N of Pectobacterium carotovorum subsp. carotovorum (strain PC1).